Here is a 370-residue protein sequence, read N- to C-terminus: 2-Hydroxyacid oxidase 1 (370 aa).

In terms of domain architecture, FMN hydroxy acid dehydrogenase spans 1–365; the sequence is MLPRLVCISD…DKTLVRKNPL (365 aa). Y26 is a glyoxylate binding site. Residues 79 to 81, S108, and Q130 each bind FMN; that span reads ATA. A glyoxylate-binding site is contributed by Y132. T158 contacts FMN. R167 serves as a coordination point for glyoxylate. The residue at position 184 (K184) is an N6-succinyllysine. Phosphoserine occurs at positions 194 and 230. Residues K236 and S258 each coordinate FMN. The glyoxylate site is built by H260 and R263. Catalysis depends on H260, which acts as the Proton acceptor. FMN-binding positions include 291–295 and 314–315; these read DGGVR and GR. Residues 368-370 carry the Microbody targeting signal motif; that stretch reads SKI.

It belongs to the FMN-dependent alpha-hydroxy acid dehydrogenase family. Homotetramer. FMN serves as cofactor. Liver.

The protein localises to the peroxisome matrix. The enzyme catalyses a (2S)-2-hydroxycarboxylate + O2 = a 2-oxocarboxylate + H2O2. The catalysed reaction is glycolate + O2 = glyoxylate + H2O2. It carries out the reaction glyoxylate + O2 + H2O = oxalate + H2O2 + H(+). It catalyses the reaction 2-hydroxyhexadecanoate + O2 = 2-oxohexadecanoate + H2O2. The enzyme catalyses 2-hydroxyoctanoate + O2 = 2-oxooctanoate + H2O2. The protein operates within amino-acid biosynthesis; glycine biosynthesis. Functionally, broad substrate specificity (S)-2-hydroxy-acid oxidase that preferentially oxidizes glycolate. The glyoxylate produced by the oxidation of glycolate can then be utilized by alanine-glyoxylate aminotransferase for the peroxisomal synthesis of glycine; this pathway appears to be an important step for the detoxification of glyoxylate which, if allowed to accumulate, may be metabolized to oxalate with formation of kidney stones. Can also catalyze the oxidation glyoxylate, and long chain hydroxyacids such as 2-hydroxyhexadecanoate and 2-hydroxyoctanoate. Active in vitro with the artificial electron acceptor 2,6-dichlorophenolindophenol (DCIP), but O2 is believed to be the physiological electron acceptor, leading to the production of H2O2. The protein is 2-Hydroxyacid oxidase 1 of Mus musculus (Mouse).